A 368-amino-acid chain; its full sequence is tRNA-specific 2-thiouridylase MnmA (368 aa).

ATP is bound by residues 11–18 (GMSGGVDS) and methionine 37. Positions 97–99 (NPD) are interaction with target base in tRNA. Residue cysteine 102 is the Nucleophile of the active site. A disulfide bond links cysteine 102 and cysteine 199. Position 127 (glycine 127) interacts with ATP. Residues 149–151 (KDQ) are interaction with tRNA. The active-site Cysteine persulfide intermediate is cysteine 199. The segment at 311-312 (RY) is interaction with tRNA.

The protein belongs to the MnmA/TRMU family. As to quaternary structure, interacts with TusE.

It localises to the cytoplasm. It catalyses the reaction S-sulfanyl-L-cysteinyl-[protein] + uridine(34) in tRNA + AH2 + ATP = 2-thiouridine(34) in tRNA + L-cysteinyl-[protein] + A + AMP + diphosphate + H(+). Catalyzes the 2-thiolation of uridine at the wobble position (U34) of tRNA(Lys), tRNA(Glu) and tRNA(Gln), leading to the formation of s(2)U34, the first step of tRNA-mnm(5)s(2)U34 synthesis. Sulfur is provided by IscS, via a sulfur-relay system. Binds ATP and its substrate tRNAs. This is tRNA-specific 2-thiouridylase MnmA from Citrobacter koseri (strain ATCC BAA-895 / CDC 4225-83 / SGSC4696).